The chain runs to 122 residues: Large ribosomal subunit protein uL24 (122 aa).

Residues 43 to 64 (IRKHHRRDMPTPQGGTTKGGII) form a disordered region.

Belongs to the universal ribosomal protein uL24 family. Part of the 50S ribosomal subunit.

In terms of biological role, one of two assembly initiator proteins, it binds directly to the 5'-end of the 23S rRNA, where it nucleates assembly of the 50S subunit. Functionally, one of the proteins that surrounds the polypeptide exit tunnel on the outside of the subunit. The sequence is that of Large ribosomal subunit protein uL24 from Cutibacterium acnes (strain DSM 16379 / KPA171202) (Propionibacterium acnes).